Reading from the N-terminus, the 850-residue chain is MEPLKNLFLKSPLGSWNGSGSGGGGGSGGVRPEGSPKATAAYANPVWTALFDYEPNGQDELALRKGDRVEVLSRDAAISGDEGWWAGQVGGQVGIFPSNYVSRGGGPPPCEVASFQELRLEEVIGIGGFGKVYRGSWRGELVAVKAARQDPDEDISVTAESVRQEARLFAMLAHPNIIALKAVCLEEPNLCLVMEYAAGGPLSRALAGRRVPPHVLVNWAVQIARGMHYLHCEALVPVIHRDLKSNNILLLQPIEGDDMEHKTLKITDFGLAREWHKTTQMSAAGTYAWMAPEVIKASTFSKGSDVWSFGVLLWELLTGEVPYRGIDCLAVAYGVAVNKLTLPIPSTCPEPFAQLMADCWAQDPHRRPDFASILQQLEALEAQVLREMPRDSFHSMQEGWKREIQGLFDELRAKEKELLSREEELTRAAREQRSQAEQLRRREHLLAQWELEVFERELTLLLQQVDRERPHVRRRRGTFKRSKLRARDGGERISMPLDFKHRITVQASPGLDRRRNVFEVGAGDSPTFPRFRAIQLEPAESGQTWGRQSPRRLDDSSNGERRACWAWGPSSPKPGEAQNGRRRSRMDEATWYLDSDDSSPLGSPSTPPALNGNPPRPSPEPEEPRRSGPTERGNSSGTPKLIQRALLRGTALLASLGLGRDLQPPGGLSRERGESPTAPPPAQMASPCPPDLPSTPLIHLSQATPDARGPLTPAPLLLDLGVSSGQPSAKSPRREETRGRTVSPPPGISRSAPGTPGTPRSPPLGLISRPRPSPLRNRIDPWSFVSAGPRPSPLPSPQPAPRRAPWTLFPDSDPFWDSPPANPFRGGSQDCRTQTKDVGAQAPWAPEAGP.

Ser11 carries the post-translational modification Phosphoserine. Residues 18–31 (GSGSGGGGGSGGVR) show a composition bias toward gly residues. Residues 18–37 (GSGSGGGGGSGGVRPEGSPK) are disordered. Phosphoserine is present on Ser35. The SH3 domain maps to 42 to 106 (YANPVWTALF…PSNYVSRGGG (65 aa)). Residues 118-380 (LRLEEVIGIG…ASILQQLEAL (263 aa)) enclose the Protein kinase domain. Residues 124-132 (IGIGGFGKV) and Lys145 contribute to the ATP site. Asp242 acts as the Proton acceptor in catalysis. Phosphothreonine; by autocatalysis is present on Thr278. Phosphoserine; by autocatalysis and MAP4K1 is present on Ser282. Residue Ser395 is modified to Phosphoserine. Leucine-zipper stretches follow at residues 404–425 (IQGL…EEEL) and 439–460 (LRRR…ELTL). 5 positions are modified to phosphoserine: Ser508, Ser525, Ser549, Ser556, and Ser557. Residues 536-850 (LEPAESGQTW…QAPWAPEAGP (315 aa)) are disordered. The segment covering 551 to 563 (RRLDDSSNGERRA) has biased composition (basic and acidic residues). Residues 598–610 (SSPLGSPSTPPAL) show a composition bias toward low complexity. Phosphoserine is present on Ser655. A compositionally biased stretch (pro residues) spans 677–693 (TAPPPAQMASPCPPDLP). Residue Thr712 is modified to Phosphothreonine. Phosphoserine occurs at positions 728, 731, 743, 751, 761, 773, 792, 796, and 818. The segment covering 790–802 (RPSPLPSPQPAPR) has biased composition (pro residues). The segment covering 803–819 (RAPWTLFPDSDPFWDSP) has biased composition (low complexity).

It belongs to the protein kinase superfamily. STE Ser/Thr protein kinase family. MAP kinase kinase kinase subfamily. Homodimer; undergoes dimerization during activation. Interacts with MAP2K4/MKK4. Interacts with MAP2K7/MKK7. Found in a complex with SH3RF1, RAC1, MAP2K7/MKK7, MAPK8IP1/JIP1 and MAPK8/JNK1. Mg(2+) is required as a cofactor. Autophosphorylation on serine and threonine residues within the activation loop plays a role in enzyme activation. Thr-278 is likely to be the main autophosphorylation site. Phosphorylation of Ser-556 and Ser-557 is induced by CDC42.

Its subcellular location is the cytoplasm. It is found in the cytoskeleton. It localises to the microtubule organizing center. The protein localises to the centrosome. The catalysed reaction is L-seryl-[protein] + ATP = O-phospho-L-seryl-[protein] + ADP + H(+). It catalyses the reaction L-threonyl-[protein] + ATP = O-phospho-L-threonyl-[protein] + ADP + H(+). Homodimerization via the leucine zipper domains is required for autophosphorylation and subsequent activation. In terms of biological role, activates the JUN N-terminal pathway. Required for serum-stimulated cell proliferation and for mitogen and cytokine activation of MAPK14 (p38), MAPK3 (ERK) and MAPK8 (JNK1) through phosphorylation and activation of MAP2K4/MKK4 and MAP2K7/MKK7. Plays a role in mitogen-stimulated phosphorylation and activation of BRAF, but does not phosphorylate BRAF directly. Influences microtubule organization during the cell cycle. This Rattus norvegicus (Rat) protein is Mitogen-activated protein kinase kinase kinase 11 (Map3k11).